A 467-amino-acid chain; its full sequence is Asparagine--tRNA ligase (467 aa).

Belongs to the class-II aminoacyl-tRNA synthetase family. As to quaternary structure, homodimer.

The protein resides in the cytoplasm. It catalyses the reaction tRNA(Asn) + L-asparagine + ATP = L-asparaginyl-tRNA(Asn) + AMP + diphosphate + H(+). In Histophilus somni (strain 129Pt) (Haemophilus somnus), this protein is Asparagine--tRNA ligase.